A 635-amino-acid chain; its full sequence is Glutamine--fructose-6-phosphate aminotransferase [isomerizing] (635 aa).

The active-site Nucleophile; for GATase activity is C2. The region spanning 2–218 is the Glutamine amidotransferase type-2 domain; it reads CGIVGMVAGR…EGDIADVHRD (217 aa). SIS domains are found at residues 299–439 and 472–625; these read FERL…AKKI and CARH…IDQP. The active-site For Fru-6P isomerization activity is K630.

Homodimer.

It localises to the cytoplasm. It catalyses the reaction D-fructose 6-phosphate + L-glutamine = D-glucosamine 6-phosphate + L-glutamate. In terms of biological role, catalyzes the first step in hexosamine metabolism, converting fructose-6P into glucosamine-6P using glutamine as a nitrogen source. This is Glutamine--fructose-6-phosphate aminotransferase [isomerizing] from Treponema pallidum (strain Nichols).